The primary structure comprises 382 residues: Alkanesulfonate monooxygenase (382 aa).

The protein belongs to the SsuD family.

The enzyme catalyses an alkanesulfonate + FMNH2 + O2 = an aldehyde + FMN + sulfite + H2O + 2 H(+). Catalyzes the desulfonation of aliphatic sulfonates. This chain is Alkanesulfonate monooxygenase, found in Pseudomonas entomophila (strain L48).